The chain runs to 111 residues: BET1-like protein (111 aa).

The Cytoplasmic segment spans residues Met1 to Lys86. Phosphoserine occurs at positions 9 and 37. The region spanning Glu15–Met77 is the t-SNARE coiled-coil homology domain. A helical; Anchor for type IV membrane protein membrane pass occupies residues Leu87 to Ser107. Topologically, residues Arg108–Thr111 are lumenal.

Component of a SNARE complex consisting of STX5, YKT6, GOSR1 and BET1L. Interacts with STX5.

It is found in the golgi apparatus membrane. The protein resides in the golgi apparatus. The protein localises to the trans-Golgi network membrane. Functionally, vesicle SNARE required for targeting and fusion of retrograde transport vesicles with the Golgi complex. Required for the integrity of the Golgi complex. The chain is BET1-like protein from Pongo abelii (Sumatran orangutan).